A 222-amino-acid polypeptide reads, in one-letter code: DnaJ homolog subfamily B member 9 (222 aa).

The first 23 residues, 1–23, serve as a signal peptide directing secretion; the sequence is MATPQSVFVFAICILMITELILA. One can recognise a J domain in the interval 26–90; the sequence is SYYDILGVPK…NSRKEYDTIG (65 aa). The interval 91 to 222 is divergent targeting domain; the sequence is HSAFTNGKGQ…VTTYTDCSGQ (132 aa). At Ser133 the chain carries Phosphoserine.

Interacts with HSPA5/BiP; interaction is direct. Interacts with ERN1/IRE1 (via the luminal region). Interacts with DERL1. In terms of processing, not N-glycosylated.

Its subcellular location is the endoplasmic reticulum lumen. Its function is as follows. Co-chaperone for Hsp70 protein HSPA5/BiP that acts as a key repressor of the ERN1/IRE1-mediated unfolded protein response (UPR). J domain-containing co-chaperones stimulate the ATPase activity of Hsp70 proteins and are required for efficient substrate recognition by Hsp70 proteins. In the unstressed endoplasmic reticulum, interacts with the luminal region of ERN1/IRE1 and selectively recruits HSPA5/BiP: HSPA5/BiP disrupts the dimerization of the active ERN1/IRE1 luminal region, thereby inactivating ERN1/IRE1. Also involved in endoplasmic reticulum-associated degradation (ERAD) of misfolded proteins. Required for survival of B-cell progenitors and normal antibody production. In Mus musculus (Mouse), this protein is DnaJ homolog subfamily B member 9.